We begin with the raw amino-acid sequence, 211 residues long: MYQPDFPPVPFRLGLYPVVDSVQWIERLLDAGVRTLQLRIKDRRDEEVEADVVAAIALGRRYNARLFINDYWRLAIKHQAYGVHLGQEDLQATDLNAIRAAGLRLGVSTHDDMEIDVALAARPSYIALGHVFPTQTKQMPSAPQGLEQLARHVERLADYPTVAIGGVSLARAPAVIATGVGSIAVVSAITQAADWRLATAQLLEIAGVGDE.

Residues 37–41 and asparagine 69 contribute to the 4-amino-2-methyl-5-(diphosphooxymethyl)pyrimidine site; that span reads QLRIK. Mg(2+) is bound by residues aspartate 70 and aspartate 89. Position 108 (serine 108) interacts with 4-amino-2-methyl-5-(diphosphooxymethyl)pyrimidine. A 2-[(2R,5Z)-2-carboxy-4-methylthiazol-5(2H)-ylidene]ethyl phosphate-binding site is contributed by 134 to 136; the sequence is TQT. Lysine 137 lines the 4-amino-2-methyl-5-(diphosphooxymethyl)pyrimidine pocket. 2-[(2R,5Z)-2-carboxy-4-methylthiazol-5(2H)-ylidene]ethyl phosphate-binding positions include glycine 166 and 186 to 187; that span reads VS.

Belongs to the thiamine-phosphate synthase family. Mg(2+) serves as cofactor.

It catalyses the reaction 2-[(2R,5Z)-2-carboxy-4-methylthiazol-5(2H)-ylidene]ethyl phosphate + 4-amino-2-methyl-5-(diphosphooxymethyl)pyrimidine + 2 H(+) = thiamine phosphate + CO2 + diphosphate. The enzyme catalyses 2-(2-carboxy-4-methylthiazol-5-yl)ethyl phosphate + 4-amino-2-methyl-5-(diphosphooxymethyl)pyrimidine + 2 H(+) = thiamine phosphate + CO2 + diphosphate. It carries out the reaction 4-methyl-5-(2-phosphooxyethyl)-thiazole + 4-amino-2-methyl-5-(diphosphooxymethyl)pyrimidine + H(+) = thiamine phosphate + diphosphate. The protein operates within cofactor biosynthesis; thiamine diphosphate biosynthesis; thiamine phosphate from 4-amino-2-methyl-5-diphosphomethylpyrimidine and 4-methyl-5-(2-phosphoethyl)-thiazole: step 1/1. Its function is as follows. Condenses 4-methyl-5-(beta-hydroxyethyl)thiazole monophosphate (THZ-P) and 2-methyl-4-amino-5-hydroxymethyl pyrimidine pyrophosphate (HMP-PP) to form thiamine monophosphate (TMP). The protein is Thiamine-phosphate synthase of Escherichia coli O9:H4 (strain HS).